The following is a 609-amino-acid chain: Isopenicillin N epimerase component 1 (609 aa).

185-196 (MLSGSGTTGLPK) is an AMP binding site. Residues 545-570 (STDNHKHNKVPLRDEGVDPRSMGSKV) form a disordered region.

This sequence belongs to the ATP-dependent AMP-binding enzyme family.

The enzyme catalyses isopenicillin N = penicillin N. The protein operates within antibiotic biosynthesis; cephalosporin C biosynthesis. Functionally, together with cefD2, catalyzes the reversible isomerization between isopenicillin N and penicillin N. This two-component IPN epimerase system may function by two sequential steps, an activation of isopenicillin N by the acyl-CoA synthase component cefD1, followed by epimerization by the acyl-CoA racemase component cefD2. This is Isopenicillin N epimerase component 1 (cefD1) from Hapsidospora chrysogena (Acremonium chrysogenum).